A 351-amino-acid chain; its full sequence is Paired box protein 2 homolog (351 aa).

The paired DNA-binding region spans 91-217 (SHTGVNQLGG…SSINRIVRNK (127 aa)). Residues 94–150 (GVNQLGGVFVNGRPLPDTIRAQIVEMSQHGTRPCDISRQLKVSHGCVSKILGRYYST) form a PAI subdomain region. The RED subdomain stretch occupies residues 169–217 (RVVECIAGYKRANPTMFAWEIRQKLIEDQICGEENVPSVSSINRIVRNK). Positions 226–246 (PTSVTPSVARPSSATSQNQRS) are enriched in polar residues. A disordered region spans residues 226 to 258 (PTSVTPSVARPSSATSQNQRSPPRGVQQHMQQS).

Its subcellular location is the nucleus. The protein resides in the chromosome. Functionally, transcription factor. Involved in negatively modulating apoptosis in germline and somatic cells, acting in partial redundancy with transcription factor egl-38/PAX5, probably by directly regulating transcription of apoptosis regulator ced-9. May bind to the DNA sequence motif 5'-GTAACG-3' in regulatory elements. In Caenorhabditis elegans, this protein is Paired box protein 2 homolog.